A 382-amino-acid polypeptide reads, in one-letter code: uncharacterized protein (382 aa).

A run of 12 helical transmembrane segments spans residues 14–34, 45–65, 75–95, 102–122, 131–151, 157–177, 204–224, 235–255, 265–284, 289–311, 325–345, and 349–369; these read GLLL…LWLA, MVSS…GYLI, YLAS…VGFW, FIAG…LMCS, LLAA…LLVS, LLHV…PLLF, LGVN…GLMP, ASIG…QWPV, LLVL…VMLT, APAL…AWAC, ALLL…AMLM, and SDNL…LMLL.

It belongs to the major facilitator superfamily. YcaD (TC 2.A.1.26) family.

It localises to the cell inner membrane. This is an uncharacterized protein from Salmonella arizonae (strain ATCC BAA-731 / CDC346-86 / RSK2980).